Reading from the N-terminus, the 338-residue chain is MKVYYDKDADLSLIKGKKVTIVGYGSQGHAHAQNLNDSGVKVTVAVRKGGASWDKAKAAGLKVEEIAKAVKTADLVMILLPDENIPQVYKEEVEPNIKKGATLAFAHGFNVHYNQVVPREDLDVIMVAPKGPGHTVRSEYLRGGGVPSLIAVYQDKSGKAKDIALSYAAANGGTKGGVIETNFKEETETDLFGEQAVLCGGAVELVKMGFETLTEAGYAPEMAYFECLHELKLIVDLMYEGGIANMNYSISNNAEYGEYVTGPEVINAQSREAMRNALKRIQTGEYAKMFIQEGKTNYPSMTARRRLNAEHPIEQVGGQLRDMMPWIKAKALVDKSKN.

The KARI N-terminal Rossmann domain occupies 1 to 181 (MKVYYDKDAD…GGTKGGVIET (181 aa)). Residues 24-27 (YGSQ), arginine 47, and serine 52 contribute to the NADP(+) site. Residue histidine 107 is part of the active site. Glycine 133 is an NADP(+) binding site. One can recognise a KARI C-terminal knotted domain in the interval 182–327 (NFKEETETDL…GQLRDMMPWI (146 aa)). Residues aspartate 190, glutamate 194, glutamate 226, and glutamate 230 each contribute to the Mg(2+) site. Serine 251 contributes to the substrate binding site.

This sequence belongs to the ketol-acid reductoisomerase family. Mg(2+) serves as cofactor.

It catalyses the reaction (2R)-2,3-dihydroxy-3-methylbutanoate + NADP(+) = (2S)-2-acetolactate + NADPH + H(+). The enzyme catalyses (2R,3R)-2,3-dihydroxy-3-methylpentanoate + NADP(+) = (S)-2-ethyl-2-hydroxy-3-oxobutanoate + NADPH + H(+). The protein operates within amino-acid biosynthesis; L-isoleucine biosynthesis; L-isoleucine from 2-oxobutanoate: step 2/4. Its pathway is amino-acid biosynthesis; L-valine biosynthesis; L-valine from pyruvate: step 2/4. Its function is as follows. Involved in the biosynthesis of branched-chain amino acids (BCAA). Catalyzes an alkyl-migration followed by a ketol-acid reduction of (S)-2-acetolactate (S2AL) to yield (R)-2,3-dihydroxy-isovalerate. In the isomerase reaction, S2AL is rearranged via a Mg-dependent methyl migration to produce 3-hydroxy-3-methyl-2-ketobutyrate (HMKB). In the reductase reaction, this 2-ketoacid undergoes a metal-dependent reduction by NADPH to yield (R)-2,3-dihydroxy-isovalerate. This Azoarcus sp. (strain BH72) protein is Ketol-acid reductoisomerase (NADP(+)).